Reading from the N-terminus, the 699-residue chain is Elongation factor G (699 aa).

Positions 8-283 (EHIRNIGICA…AIVDFLPSPI (276 aa)) constitute a tr-type G domain. Residues 17 to 24 (AHIDAGKT), 81 to 85 (DTPGH), and 135 to 138 (NKMD) each bind GTP.

It belongs to the TRAFAC class translation factor GTPase superfamily. Classic translation factor GTPase family. EF-G/EF-2 subfamily.

It localises to the cytoplasm. Catalyzes the GTP-dependent ribosomal translocation step during translation elongation. During this step, the ribosome changes from the pre-translocational (PRE) to the post-translocational (POST) state as the newly formed A-site-bound peptidyl-tRNA and P-site-bound deacylated tRNA move to the P and E sites, respectively. Catalyzes the coordinated movement of the two tRNA molecules, the mRNA and conformational changes in the ribosome. The protein is Elongation factor G of Rickettsia typhi (strain ATCC VR-144 / Wilmington).